The sequence spans 380 residues: Nucleoporin Nup43 (380 aa).

An N-acetylmethionine modification is found at M1. 6 WD repeats span residues F8–S57, R72–S110, P127–T166, A170–S208, G215–S255, and A259–S299.

In terms of assembly, component of the Nup107-160 subcomplex of the nuclear pore complex (NPC). The Nup107-160 subcomplex includes NUP160, NUP133, NUP107, NUP98, NUP85, NUP43, NUP37, SEH1 and SEC13.

Its subcellular location is the chromosome. It is found in the centromere. The protein resides in the kinetochore. It localises to the nucleus. The protein localises to the nuclear pore complex. Component of the Nup107-160 subcomplex of the nuclear pore complex (NPC). The Nup107-160 subcomplex is required for the assembly of a functional NPC. The Nup107-160 subcomplex is also required for normal kinetochore microtubule attachment, mitotic progression and chromosome segregation. The protein is Nucleoporin Nup43 (NUP43) of Homo sapiens (Human).